The primary structure comprises 644 residues: Exoribonuclease 2 (644 aa).

The 328-residue stretch at 189–516 (RQDLTALNFV…NHRLLKAVIK (328 aa)) folds into the RNB domain. Residues 561–643 (NTRFAAEIID…ETRSIIARPA (83 aa)) enclose the S1 motif domain.

The protein belongs to the RNR ribonuclease family. RNase II subfamily.

The protein localises to the cytoplasm. It carries out the reaction Exonucleolytic cleavage in the 3'- to 5'-direction to yield nucleoside 5'-phosphates.. Functionally, involved in mRNA degradation. Hydrolyzes single-stranded polyribonucleotides processively in the 3' to 5' direction. The chain is Exoribonuclease 2 from Salmonella paratyphi B (strain ATCC BAA-1250 / SPB7).